Consider the following 459-residue polypeptide: Argininosuccinate lyase (459 aa).

It belongs to the lyase 1 family. Argininosuccinate lyase subfamily.

Its subcellular location is the cytoplasm. It carries out the reaction 2-(N(omega)-L-arginino)succinate = fumarate + L-arginine. The protein operates within amino-acid biosynthesis; L-arginine biosynthesis; L-arginine from L-ornithine and carbamoyl phosphate: step 3/3. This Geobacillus kaustophilus (strain HTA426) protein is Argininosuccinate lyase.